Consider the following 526-residue polypeptide: Tyrosine-protein kinase transforming protein Src (526 aa).

Positions 1–52 are disordered; sequence MGSSKSKPKDPSQRRHSLEPPDSTHHGGFPASQTPDETAAPDAHRNPSRSFG. Residue Gly-2 is the site of N-myristoyl glycine; by host attachment. Over residues 7-25 the composition is skewed to basic and acidic residues; the sequence is KPKDPSQRRHSLEPPDSTH. 2 consecutive SH3 domains span residues 71–139 and 81–142; these read TSPQ…YVAP and GGVT…PSDS. The SH2 domain occupies 148–245; sequence WYFGKITRRE…GLCHRLANVC (98 aa). Positions 267–517 constitute a Protein kinase domain; it reads LRLEAKLGQG…TFKYLQAQLL (251 aa). ATP contacts are provided by residues 273 to 281 and Lys-295; that span reads LGQGCFGEV. Asp-386 serves as the catalytic Proton acceptor. Tyr-416 is modified (phosphotyrosine; by autocatalysis).

This sequence belongs to the protein kinase superfamily. Tyr protein kinase family. SRC subfamily. In terms of assembly, homodimer. Post-translationally, the phosphorylated form is termed pp60v-src.

The enzyme catalyses L-tyrosyl-[protein] + ATP = O-phospho-L-tyrosyl-[protein] + ADP + H(+). Functionally, this phosphoprotein, required for both the initiation and the maintenance of neoplastic transformation, is a protein kinase that catalyzes the phosphorylation of tyrosine residues in vitro. The sequence is that of Tyrosine-protein kinase transforming protein Src (V-SRC) from Gallus gallus (Chicken).